The following is a 460-amino-acid chain: Bifunctional protein GlmU (460 aa).

The interval 1–232 (MENVAAIILA…SDEIMGVNDR (232 aa)) is pyrophosphorylase. UDP-N-acetyl-alpha-D-glucosamine is bound by residues 9–12 (LAAG), K23, Q75, and 80–81 (GT). Residue D105 participates in Mg(2+) binding. Positions 142, 157, 172, and 230 each coordinate UDP-N-acetyl-alpha-D-glucosamine. Mg(2+) is bound at residue N230. The tract at residues 233–253 (AQLAQAARILRRRINRDLMLS) is linker. Positions 254–460 (GVSLVDPEQT…GWRIRMKKKT (207 aa)) are N-acetyltransferase. Residues R336 and K354 each coordinate UDP-N-acetyl-alpha-D-glucosamine. Catalysis depends on H366, which acts as the Proton acceptor. Residues Y369 and N380 each coordinate UDP-N-acetyl-alpha-D-glucosamine. Acetyl-CoA is bound by residues 389–390 (NY), S408, A426, and R443.

It in the N-terminal section; belongs to the N-acetylglucosamine-1-phosphate uridyltransferase family. This sequence in the C-terminal section; belongs to the transferase hexapeptide repeat family. Homotrimer. It depends on Mg(2+) as a cofactor.

The protein resides in the cytoplasm. It carries out the reaction alpha-D-glucosamine 1-phosphate + acetyl-CoA = N-acetyl-alpha-D-glucosamine 1-phosphate + CoA + H(+). The catalysed reaction is N-acetyl-alpha-D-glucosamine 1-phosphate + UTP + H(+) = UDP-N-acetyl-alpha-D-glucosamine + diphosphate. It participates in nucleotide-sugar biosynthesis; UDP-N-acetyl-alpha-D-glucosamine biosynthesis; N-acetyl-alpha-D-glucosamine 1-phosphate from alpha-D-glucosamine 6-phosphate (route II): step 2/2. It functions in the pathway nucleotide-sugar biosynthesis; UDP-N-acetyl-alpha-D-glucosamine biosynthesis; UDP-N-acetyl-alpha-D-glucosamine from N-acetyl-alpha-D-glucosamine 1-phosphate: step 1/1. Its pathway is bacterial outer membrane biogenesis; LPS lipid A biosynthesis. Catalyzes the last two sequential reactions in the de novo biosynthetic pathway for UDP-N-acetylglucosamine (UDP-GlcNAc). The C-terminal domain catalyzes the transfer of acetyl group from acetyl coenzyme A to glucosamine-1-phosphate (GlcN-1-P) to produce N-acetylglucosamine-1-phosphate (GlcNAc-1-P), which is converted into UDP-GlcNAc by the transfer of uridine 5-monophosphate (from uridine 5-triphosphate), a reaction catalyzed by the N-terminal domain. The chain is Bifunctional protein GlmU from Pelobacter propionicus (strain DSM 2379 / NBRC 103807 / OttBd1).